Consider the following 202-residue polypeptide: Osteoclast-stimulating factor 1 (202 aa).

The region spanning 12 to 71 (GQVKVFRALYTFEPRTPDELYFEEGDIIYISDMSDTNWWKGTCKGRTGLIPSNYVAEQAE) is the SH3 domain. 3 ANK repeats span residues 72–101 (SIDN…GVNG), 105–135 (AGNT…ELNQ), and 139–168 (LGDT…RTDL).

It localises to the cytoplasm. In terms of biological role, induces bone resorption, acting probably through a signaling cascade which results in the secretion of factor(s) enhancing osteoclast formation and activity. This chain is Osteoclast-stimulating factor 1 (OSTF1), found in Gallus gallus (Chicken).